The sequence spans 507 residues: Ribosomal protein uS12 methylthiotransferase RimO (507 aa).

Residues 13–124 (RRVALLTLGC…ISDRLGAVLA (112 aa)) enclose the MTTase N-terminal domain. [4Fe-4S] cluster-binding residues include Cys22, Cys58, and Cys87. The segment at 150–175 (AAVSLPGHGTRAAAAGPGGRSAPVEV) is disordered. A compositionally biased stretch (low complexity) spans 155–172 (PGHGTRAAAAGPGGRSAP). The Radical SAM core domain maps to 191 to 422 (LDTGPVASLK…ALADELCAQR (232 aa)). Residues Cys205, Cys209, and Cys212 each contribute to the [4Fe-4S] cluster site. The region spanning 424-497 (EQRLGSTVQV…GVDLVAVPDG (74 aa)) is the TRAM domain.

It belongs to the methylthiotransferase family. RimO subfamily. [4Fe-4S] cluster is required as a cofactor.

The protein localises to the cytoplasm. It carries out the reaction L-aspartate(89)-[ribosomal protein uS12]-hydrogen + (sulfur carrier)-SH + AH2 + 2 S-adenosyl-L-methionine = 3-methylsulfanyl-L-aspartate(89)-[ribosomal protein uS12]-hydrogen + (sulfur carrier)-H + 5'-deoxyadenosine + L-methionine + A + S-adenosyl-L-homocysteine + 2 H(+). In terms of biological role, catalyzes the methylthiolation of an aspartic acid residue of ribosomal protein uS12. This is Ribosomal protein uS12 methylthiotransferase RimO from Salinispora arenicola (strain CNS-205).